Here is a 168-residue protein sequence, read N- to C-terminus: Small ribosomal subunit protein uS8 (168 aa).

The tract at residues 59-93 is not found in other S8 sequences; it reads EEYKKMKELAEKSPNPKMKRYLKQLEEYNKGTQYP.

The protein belongs to the universal ribosomal protein uS8 family. Part of the 30S ribosomal subunit. Contacts proteins S5 and S12.

In terms of biological role, one of the primary rRNA binding proteins, it binds directly to 16S rRNA central domain where it helps coordinate assembly of the platform of the 30S subunit. The sequence is that of Small ribosomal subunit protein uS8 from Aquifex aeolicus (strain VF5).